Consider the following 115-residue polypeptide: MASSAVIKLALVVALCMAVSVAHAITCSQVSANLAPCINYVRSGGAVPPACCNGIKTINGLAKTTPDRQAACNCLKNLAGSVSGVNPGNAESLPGKCGVNVPYKISTSTNCATVK.

Positions 1–24 (MASSAVIKLALVVALCMAVSVAHA) are cleaved as a signal peptide. 4 disulfide bridges follow: Cys27–Cys74, Cys37–Cys51, Cys52–Cys97, and Cys72–Cys111.

It belongs to the plant LTP family.

Plant non-specific lipid-transfer proteins transfer phospholipids as well as galactolipids across membranes. May play a role in wax or cutin deposition in the cell walls of expanding epidermal cells and certain secretory tissues. This is Non-specific lipid-transfer protein from Pyrus communis (Pear).